We begin with the raw amino-acid sequence, 361 residues long: Gibberellin 20 oxidase 1-D (361 aa).

The Fe2OG dioxygenase domain maps to 199 to 299; that stretch reads GNDSIMRLNY…RKSLAFFLCP (101 aa). Fe cation-binding residues include His-224, Asp-226, and His-280. Arg-290 is an active-site residue.

This sequence belongs to the iron/ascorbate-dependent oxidoreductase family. GA20OX subfamily. Fe cation serves as cofactor. L-ascorbate is required as a cofactor. In terms of tissue distribution, expressed in nodes and the ear of the elongating stem.

The enzyme catalyses gibberellin A12 + 2 2-oxoglutarate + 3 O2 + H(+) = gibberellin A9 + 2 succinate + 3 CO2 + 2 H2O. It carries out the reaction gibberellin A53 + 2 2-oxoglutarate + 3 O2 + H(+) = gibberellin A20 + 2 succinate + 3 CO2 + 2 H2O. Its function is as follows. Key oxidase enzyme in the biosynthesis of gibberellin that catalyzes the conversion of GA12 and GA53 to GA9 and GA20 respectively, via a three-step oxidation at C-20 of the GA skeleton. This Triticum aestivum (Wheat) protein is Gibberellin 20 oxidase 1-D (GA20ox1D).